The primary structure comprises 94 residues: Protein S100-A1 (94 aa).

2 consecutive EF-hand domains span residues 13–48 (INVF…FLDV) and 50–85 (KDAD…LTVA). Lysine 28, glutamate 33, aspartate 63, asparagine 65, aspartate 67, glutamate 69, and glutamate 74 together coordinate Ca(2+). Cysteine 86 is modified (S-nitrosocysteine).

This sequence belongs to the S-100 family. As to quaternary structure, dimer of either two alpha chains, or two beta chains, or one alpha and one beta chain. Also forms heterodimers with S100P. Interacts with AGER. Interacts with CAPZA1. Interacts with FKBP4. Interacts with RYR1 and RYR2. Interacts with CACYBP in a calcium-dependent manner. Interacts with PPP5C (via TPR repeats); the interaction is calcium-dependent and modulates PPP5C activity. Interacts with ATP2A2 and PLN in a Ca(2+)-dependent manner. Interacts with mitochondrial F1-ATPase subunits ATP5F1A and ATP5F1B; these interactions increase F1-ATPase activity. Post-translationally, glutathionylated; glutathionylation increases affinity to calcium about 10-fold. As to expression, although predominant among the water-soluble brain proteins, S100 is also found in a variety of other tissues.

It localises to the cytoplasm. Its subcellular location is the sarcoplasmic reticulum. The protein resides in the mitochondrion. In terms of biological role, small calcium binding protein that plays important roles in several biological processes such as Ca(2+) homeostasis, chondrocyte biology and cardiomyocyte regulation. In response to an increase in intracellular Ca(2+) levels, binds calcium which triggers conformational changes. These changes allow interactions with specific target proteins and modulate their activity. Regulates a network in cardiomyocytes controlling sarcoplasmic reticulum Ca(2+) cycling and mitochondrial function through interaction with the ryanodine receptors RYR1 and RYR2, sarcoplasmic reticulum Ca(2+)-ATPase/ATP2A2 and mitochondrial F1-ATPase. Facilitates diastolic Ca(2+) dissociation and myofilament mechanics in order to improve relaxation during diastole. The polypeptide is Protein S100-A1 (S100a1) (Rattus norvegicus (Rat)).